A 145-amino-acid chain; its full sequence is D-aminoacyl-tRNA deacylase (145 aa).

The Gly-cisPro motif, important for rejection of L-amino acids signature appears at 137-138; that stretch reads GP.

This sequence belongs to the DTD family. In terms of assembly, homodimer.

Its subcellular location is the cytoplasm. The catalysed reaction is glycyl-tRNA(Ala) + H2O = tRNA(Ala) + glycine + H(+). It carries out the reaction a D-aminoacyl-tRNA + H2O = a tRNA + a D-alpha-amino acid + H(+). Functionally, an aminoacyl-tRNA editing enzyme that deacylates mischarged D-aminoacyl-tRNAs. Also deacylates mischarged glycyl-tRNA(Ala), protecting cells against glycine mischarging by AlaRS. Acts via tRNA-based rather than protein-based catalysis; rejects L-amino acids rather than detecting D-amino acids in the active site. By recycling D-aminoacyl-tRNA to D-amino acids and free tRNA molecules, this enzyme counteracts the toxicity associated with the formation of D-aminoacyl-tRNA entities in vivo and helps enforce protein L-homochirality. This Pseudomonas putida (strain ATCC 47054 / DSM 6125 / CFBP 8728 / NCIMB 11950 / KT2440) protein is D-aminoacyl-tRNA deacylase.